Here is a 206-residue protein sequence, read N- to C-terminus: ATP phosphoribosyltransferase (206 aa).

It belongs to the ATP phosphoribosyltransferase family. Short subfamily. As to quaternary structure, heteromultimer composed of HisG and HisZ subunits.

The protein localises to the cytoplasm. It carries out the reaction 1-(5-phospho-beta-D-ribosyl)-ATP + diphosphate = 5-phospho-alpha-D-ribose 1-diphosphate + ATP. The protein operates within amino-acid biosynthesis; L-histidine biosynthesis; L-histidine from 5-phospho-alpha-D-ribose 1-diphosphate: step 1/9. In terms of biological role, catalyzes the condensation of ATP and 5-phosphoribose 1-diphosphate to form N'-(5'-phosphoribosyl)-ATP (PR-ATP). Has a crucial role in the pathway because the rate of histidine biosynthesis seems to be controlled primarily by regulation of HisG enzymatic activity. This Campylobacter curvus (strain 525.92) protein is ATP phosphoribosyltransferase.